The following is a 250-amino-acid chain: Triosephosphate isomerase (250 aa).

Residue 9 to 11 coordinates substrate; that stretch reads NWK. His96 functions as the Electrophile in the catalytic mechanism. The Proton acceptor role is filled by Glu166. Substrate-binding positions include Gly172, Ser212, and 233 to 234; that span reads GG.

Belongs to the triosephosphate isomerase family. As to quaternary structure, homodimer.

Its subcellular location is the cytoplasm. The enzyme catalyses D-glyceraldehyde 3-phosphate = dihydroxyacetone phosphate. The protein operates within carbohydrate biosynthesis; gluconeogenesis. It functions in the pathway carbohydrate degradation; glycolysis; D-glyceraldehyde 3-phosphate from glycerone phosphate: step 1/1. Functionally, involved in the gluconeogenesis. Catalyzes stereospecifically the conversion of dihydroxyacetone phosphate (DHAP) to D-glyceraldehyde-3-phosphate (G3P). This is Triosephosphate isomerase from Chlorobium luteolum (strain DSM 273 / BCRC 81028 / 2530) (Pelodictyon luteolum).